Here is a 586-residue protein sequence, read N- to C-terminus: Asparagine synthetase [glutamine-hydrolyzing] (586 aa).

Cys-2 acts as the For GATase activity in catalysis. Positions 2–185 (CGILAVLGCS…PGHLYSSKSG (184 aa)) constitute a Glutamine amidotransferase type-2 domain. L-glutamine is bound by residues 50-54 (RLAII), 75-77 (NGE), and Asp-98. The region spanning 194–517 (PPWFNESVPS…PQNSARLTVP (324 aa)) is the Asparagine synthetase domain. ATP contacts are provided by residues Leu-232, Val-268, and 342-343 (SG).

This sequence belongs to the asparagine synthetase family.

It catalyses the reaction L-aspartate + L-glutamine + ATP + H2O = L-asparagine + L-glutamate + AMP + diphosphate + H(+). It functions in the pathway amino-acid biosynthesis; L-asparagine biosynthesis; L-asparagine from L-aspartate (L-Gln route): step 1/1. This chain is Asparagine synthetase [glutamine-hydrolyzing], found in Brassica oleracea (Wild cabbage).